Reading from the N-terminus, the 101-residue chain is Small ribosomal subunit protein uS14 (101 aa).

Belongs to the universal ribosomal protein uS14 family. In terms of assembly, part of the 30S ribosomal subunit. Contacts proteins S3 and S10.

Its function is as follows. Binds 16S rRNA, required for the assembly of 30S particles and may also be responsible for determining the conformation of the 16S rRNA at the A site. This chain is Small ribosomal subunit protein uS14, found in Actinobacillus succinogenes (strain ATCC 55618 / DSM 22257 / CCUG 43843 / 130Z).